Reading from the N-terminus, the 434-residue chain is D-amino acid dehydrogenase (434 aa).

3–17 (VIILGGGVIGVTSAW) contributes to the FAD binding site.

The protein belongs to the DadA oxidoreductase family. Requires FAD as cofactor.

The catalysed reaction is a D-alpha-amino acid + A + H2O = a 2-oxocarboxylate + AH2 + NH4(+). Its pathway is amino-acid degradation; D-alanine degradation; NH(3) and pyruvate from D-alanine: step 1/1. Oxidative deamination of D-amino acids. This Proteus mirabilis (strain HI4320) protein is D-amino acid dehydrogenase.